Consider the following 73-residue polypeptide: Stigmurin (73 aa).

The signal sequence occupies residues 1–22 (MQIKHLITLFFLVLIVADQCSA). K39 carries the lysine amide modification. A propeptide spanning residues 45-73 (EISAQIEQYKDLQKREAELEKLLDRLPMY) is cleaved from the precursor.

It belongs to the non-disulfide-bridged peptide (NDBP) superfamily. Short antimicrobial peptide (group 4) family. As to expression, expressed by the venom gland.

The protein localises to the secreted. In terms of biological role, antimicrobial peptide with activity against Gram-positive bacterial strains (S.aureus (MIC=2-140 uM), methicillin-resistant S.aureus (MRSA) (MIC=8-17 uM), S.epidermidis (MIC=1.17 uM), and the yeasts C.albicans, C.krusei, and C.glabrata (MIC=34-69 uM)). Acts by disrupting the cell membrane (observed on outer layer of the S.aureus). Is not active against Gram-negative bacteria (E.coli, E.Cloacae, P.aeruginosa), and the Gram-positive bacterium E.faecalis. Also shows toxicity against several cell lines, but possess low hemolytic activity at the highest concentration tested. Also shows antiparasitic activity against Trypanosoma cruzi by decreasing the viability of the epimastigote and trypomastigote forms of the parasite. Displays high hydroxyl radical scavenging activity (antioxidant action). In a wound infection model, the topical application of this peptide demonstrates antibacterial effects, as well as an ability to accelerate wound closure speed, which suggests the induction of tissue repair. In the model of polymicrobial sepsis, it exhibits an antibiotic effect, reducing the levels of microorganisms in the infectious focus and the inflammatory responses in the lung and cecum of septic animals. The chain is Stigmurin from Tityus stigmurus (Brazilian scorpion).